The sequence spans 417 residues: Serine--tRNA ligase (417 aa).

232–234 (TAE) lines the L-serine pocket. ATP is bound by residues 263-265 (RRE) and valine 279. Glutamate 286 serves as a coordination point for L-serine. Residue 350–353 (EISS) participates in ATP binding. Serine 385 is a binding site for L-serine.

Belongs to the class-II aminoacyl-tRNA synthetase family. Type-1 seryl-tRNA synthetase subfamily. In terms of assembly, homodimer. The tRNA molecule binds across the dimer.

Its subcellular location is the cytoplasm. It carries out the reaction tRNA(Ser) + L-serine + ATP = L-seryl-tRNA(Ser) + AMP + diphosphate + H(+). It catalyses the reaction tRNA(Sec) + L-serine + ATP = L-seryl-tRNA(Sec) + AMP + diphosphate + H(+). It functions in the pathway aminoacyl-tRNA biosynthesis; selenocysteinyl-tRNA(Sec) biosynthesis; L-seryl-tRNA(Sec) from L-serine and tRNA(Sec): step 1/1. Functionally, catalyzes the attachment of serine to tRNA(Ser). Is also able to aminoacylate tRNA(Sec) with serine, to form the misacylated tRNA L-seryl-tRNA(Sec), which will be further converted into selenocysteinyl-tRNA(Sec). The sequence is that of Serine--tRNA ligase from Leptospira interrogans serogroup Icterohaemorrhagiae serovar copenhageni (strain Fiocruz L1-130).